Consider the following 1040-residue polypeptide: uncharacterized protein (1040 aa).

Residues R403 to K588 enclose the Helicase ATP-binding domain. Position 416-423 (D416–T423) interacts with ATP. The segment at C746–E798 adopts an RING-type zinc-finger fold. The Helicase C-terminal domain maps to K866–S1032.

This sequence belongs to the SNF2/RAD54 helicase family.

The protein resides in the nucleus. This is an uncharacterized protein from Schizosaccharomyces pombe (strain 972 / ATCC 24843) (Fission yeast).